The following is a 358-amino-acid chain: Uroporphyrinogen decarboxylase (358 aa).

Substrate is bound by residues 29–33, Asp-79, Tyr-155, Ser-210, and His-330; that span reads RQAGR.

This sequence belongs to the uroporphyrinogen decarboxylase family. Homodimer.

The protein resides in the cytoplasm. It catalyses the reaction uroporphyrinogen III + 4 H(+) = coproporphyrinogen III + 4 CO2. It participates in porphyrin-containing compound metabolism; protoporphyrin-IX biosynthesis; coproporphyrinogen-III from 5-aminolevulinate: step 4/4. In terms of biological role, catalyzes the decarboxylation of four acetate groups of uroporphyrinogen-III to yield coproporphyrinogen-III. The sequence is that of Uroporphyrinogen decarboxylase from Bordetella petrii (strain ATCC BAA-461 / DSM 12804 / CCUG 43448).